The sequence spans 115 residues: NADH-ubiquinone oxidoreductase chain 3 (115 aa).

The next 3 helical transmembrane spans lie at 3-23 (LVMA…IAFW), 55-75 (FFLV…LLPL), and 86-106 (TMLI…AYEW).

Belongs to the complex I subunit 3 family. Core subunit of respiratory chain NADH dehydrogenase (Complex I) which is composed of 45 different subunits. Interacts with TMEM186. Interacts with TMEM242.

It is found in the mitochondrion inner membrane. It catalyses the reaction a ubiquinone + NADH + 5 H(+)(in) = a ubiquinol + NAD(+) + 4 H(+)(out). In terms of biological role, core subunit of the mitochondrial membrane respiratory chain NADH dehydrogenase (Complex I) which catalyzes electron transfer from NADH through the respiratory chain, using ubiquinone as an electron acceptor. Essential for the catalytic activity of complex I. This is NADH-ubiquinone oxidoreductase chain 3 from Hippopotamus amphibius (Hippopotamus).